The following is a 453-amino-acid chain: MWSPEREAEAPAGGDPAGLLPPEWEEDEERMSFLFSAFKRSREVNSTDWDSKMGFWAPLVLSHSRRQGVVRLRLRDLQEAFQRKGSVPLGLATVLQDLLRRGELQRESDFMASVDSSWISWGVGVFLLKPLKWTLSNMLGDNKVPAEEVLVAVELLKEKAEEVYRLYQNSPLSSHPVVALSELSTLCANSCPDERTFYLVLLQLQKEKRVTVLEQNGEKIVKFARGPRAKVSPVNDVDVGVYQLMQSEQLLSRKVESLSQEAERCKEEARRACRAGKKQLALRSLKAKQRTEKRIEALHAKLDTVQGILDRIYASQTDQMVFNAYQAGVGALKLSMKDVTVEKAESLVDQIQELCDTQDEVSQTLAGGVTNGLDFDSEELEKELDILLQDTTKEPLDLPDNPRNRHFTNSVPNPRISDAELEAELEKLSLSEGGLVPSSKSPKRQLEPTLKPL.

A disordered region spans residues 1-22; sequence MWSPEREAEAPAGGDPAGLLPP. Residues 10-22 are compositionally biased toward low complexity; sequence APAGGDPAGLLPP. The residue at position 232 (S232) is a Phosphoserine. Residues 243-312 adopt a coiled-coil conformation; that stretch reads QLMQSEQLLS…DTVQGILDRI (70 aa). The segment covering 392–403 has biased composition (basic and acidic residues); that stretch reads TKEPLDLPDNPR. 2 disordered regions span residues 392-417 and 431-453; these read TKEP…PRIS and SEGG…LKPL. T408 bears the Phosphothreonine mark. Residues S410, S417, S431, and S441 each carry the phosphoserine modification.

It belongs to the SNF7 family. As to quaternary structure, interacts with CHMP4B, but not with VPS25. Interacts with LEMD2 (via C-terminus).

The protein resides in the cytoplasm. It localises to the nucleus envelope. ESCRT-III-like protein required to recruit the ESCRT-III complex to the nuclear envelope (NE) during late anaphase. Together with SPAST, the ESCRT-III complex promotes NE sealing and mitotic spindle disassembly during late anaphase. Recruited to the reforming NE during anaphase by LEMD2. Plays a role in the endosomal sorting pathway. In Homo sapiens (Human), this protein is Charged multivesicular body protein 7 (CHMP7).